A 1231-amino-acid chain; its full sequence is Multifunctional 2-oxoglutarate metabolism enzyme (1231 aa).

Positions 1 to 41 (MANISSPFGQNEWLVEAMYRKFRDDPSSVDPSWHEFLVDYS) are 2-oxoglutarate dehydrogenase E1, N-terminal part. Positions 24 to 37 (DDPSSVDPSWHEFL) are enriched in basic and acidic residues. Residues 24–56 (DDPSSVDPSWHEFLVDYSPEPTSQPAAEPTRVT) are disordered. The linker stretch occupies residues 42-88 (PEPTSQPAAEPTRVTSPLVAERAAAAAPQAPPKPADTAAAGNGVVAA). The interval 89-337 (LAAKTAVPPP…LRTIHELLLS (249 aa)) is succinyltransferase E2. His-316 acts as the Proton acceptor; for succinyltransferase activity in catalysis. A 2-oxoglutarate dehydrogenase E1, C-terminal part region spans residues 338 to 1231 (DGFWDEVFRE…QQEILDEAFG (894 aa)). Position 542 (Arg-542) interacts with thiamine diphosphate. 2-oxoglutarate is bound by residues His-581 and Ser-606. Thiamine diphosphate-binding residues include Ser-606, Leu-608, Asp-649, Ala-650, Ala-651, and Asn-682. Asp-649 is a binding site for Mg(2+). Mg(2+)-binding residues include Asn-682 and Ile-684. Residues 787 to 817 (DISMKEAEDALRDYQGQLERVFNEVRELEKH) are a coiled coil. 2-oxoglutarate is bound at residue His-1024. The acetyl-CoA site is built by Thr-1042, Arg-1058, Lys-1093, Ser-1096, Gln-1146, Arg-1153, and Arg-1154.

It belongs to the 2-oxoacid dehydrogenase family. Kgd subfamily. As to quaternary structure, homodimer. The 2-oxoglutarate dehydrogenase (ODH) complex contains multiple copies of three enzymatic components: 2-oxoglutarate dehydrogenase (E1), dihydrolipoamide succinyltransferase (E2) and lipoamide dehydrogenase (E3). It depends on Mg(2+) as a cofactor. The cofactor is thiamine diphosphate.

The catalysed reaction is glyoxylate + 2-oxoglutarate + H(+) = 2-hydroxy-3-oxoadipate + CO2. It catalyses the reaction 2-oxoglutarate + H(+) = succinate semialdehyde + CO2. The enzyme catalyses N(6)-[(R)-lipoyl]-L-lysyl-[protein] + 2-oxoglutarate + H(+) = N(6)-[(R)-S(8)-succinyldihydrolipoyl]-L-lysyl-[protein] + CO2. It carries out the reaction N(6)-[(R)-dihydrolipoyl]-L-lysyl-[protein] + succinyl-CoA = N(6)-[(R)-S(8)-succinyldihydrolipoyl]-L-lysyl-[protein] + CoA. It functions in the pathway carbohydrate metabolism; tricarboxylic acid cycle; succinate from 2-oxoglutarate (transferase route): step 1/2. Its pathway is carbohydrate metabolism; tricarboxylic acid cycle; succinyl-CoA from 2-oxoglutarate (dehydrogenase route): step 1/1. With respect to regulation, alpha-ketoglutarate dehydrogenase and decarboxylase activities are inhibited by unphosphorylated GarA, and allosterically activated by acetyl-CoA, the main substrate of the TCA cycle. Its function is as follows. Shows three enzymatic activities that share a first common step, the attack of thiamine-PP on 2-oxoglutarate (alpha-ketoglutarate, KG), leading to the formation of an enamine-thiamine-PP intermediate upon decarboxylation. Thus, displays KGD activity, catalyzing the decarboxylation from five-carbon 2-oxoglutarate to four-carbon succinate semialdehyde (SSA). Also catalyzes C-C bond formation between the activated aldehyde formed after decarboxylation of alpha-ketoglutarate and the carbonyl of glyoxylate (GLX), to yield 2-hydroxy-3-oxoadipate (HOA), which spontaneously decarboxylates to form 5-hydroxylevulinate (HLA). And is also a component of the 2-oxoglutarate dehydrogenase (ODH) complex, that catalyzes the overall conversion of 2-oxoglutarate to succinyl-CoA and CO(2). The KG decarboxylase and KG dehydrogenase reactions provide two alternative, tightly regulated, pathways connecting the oxidative and reductive branches of the TCA cycle. The polypeptide is Multifunctional 2-oxoglutarate metabolism enzyme (kgd) (Mycobacterium bovis (strain ATCC BAA-935 / AF2122/97)).